We begin with the raw amino-acid sequence, 352 residues long: CRISPR-associated endonuclease Cas1 1 (352 aa).

3 residues coordinate Mn(2+): glutamate 207, histidine 274, and glutamate 289.

The protein belongs to the CRISPR-associated endonuclease Cas1 family. As to quaternary structure, homodimer, forms a heterotetramer with a Cas2 homodimer. Requires Mg(2+) as cofactor. Mn(2+) serves as cofactor.

CRISPR (clustered regularly interspaced short palindromic repeat), is an adaptive immune system that provides protection against mobile genetic elements (viruses, transposable elements and conjugative plasmids). CRISPR clusters contain spacers, sequences complementary to antecedent mobile elements, and target invading nucleic acids. CRISPR clusters are transcribed and processed into CRISPR RNA (crRNA). Acts as a dsDNA endonuclease. Involved in the integration of spacer DNA into the CRISPR cassette. In Saccharolobus solfataricus (strain ATCC 35092 / DSM 1617 / JCM 11322 / P2) (Sulfolobus solfataricus), this protein is CRISPR-associated endonuclease Cas1 1.